The sequence spans 656 residues: Bifunctional protein ThiO/ThiG (656 aa).

Positions 1 to 395 (MQTTSDVLII…HAAENSEGSK (395 aa)) are thiO. Residues 7–21 (VLII…AIAV) and 48–50 (AGM) contribute to the FAD site. Position 56 (glutamate 56) interacts with glycine. Residue valine 169 coordinates FAD. The glycine site is built by arginine 298 and arginine 324. 322-328 (HYRNGIL) provides a ligand contact to FAD. The interval 396–656 (DLLEIAGRKF…ASSPLTGLVG (261 aa)) is thiG. Catalysis depends on lysine 498, which acts as the Schiff-base intermediate with DXP. 1-deoxy-D-xylulose 5-phosphate contacts are provided by residues glycine 559, 585–586 (AG), and 607–608 (NS).

In the N-terminal section; belongs to the DAO family. ThiO subfamily. This sequence in the C-terminal section; belongs to the ThiG family. In terms of assembly, interacts with ThiH and ThiS. FAD serves as cofactor.

It is found in the cytoplasm. It catalyses the reaction glycine + O2 + H2O = glyoxylate + H2O2 + NH4(+). The catalysed reaction is [ThiS sulfur-carrier protein]-C-terminal-Gly-aminoethanethioate + 2-iminoacetate + 1-deoxy-D-xylulose 5-phosphate = [ThiS sulfur-carrier protein]-C-terminal Gly-Gly + 2-[(2R,5Z)-2-carboxy-4-methylthiazol-5(2H)-ylidene]ethyl phosphate + 2 H2O + H(+). The protein operates within cofactor biosynthesis; thiamine diphosphate biosynthesis. Its function is as follows. Catalyzes the FAD-dependent oxidative deamination of glycine. Is essential for thiamine biosynthesis since the oxidation of glycine catalyzed by ThiO generates the glycine imine intermediate (dehydroglycine) required for the biosynthesis of the thiazole ring of thiamine pyrophosphate. Functionally, catalyzes the rearrangement of 1-deoxy-D-xylulose 5-phosphate (DXP) to produce the thiazole phosphate moiety of thiamine. Sulfur is provided by the thiocarboxylate moiety of the carrier protein ThiS. In vitro, sulfur can be provided by H(2)S. The polypeptide is Bifunctional protein ThiO/ThiG (thiO/thiG) (Synechocystis sp. (strain ATCC 27184 / PCC 6803 / Kazusa)).